Here is an 839-residue protein sequence, read N- to C-terminus: DNA gyrase subunit A (839 aa).

The Topo IIA-type catalytic domain occupies 46 to 510; the sequence is LPDARDGLKP…ISEDIDDEDL (465 aa). Tyrosine 134 serves as the catalytic O-(5'-phospho-DNA)-tyrosine intermediate. A GyrA-box motif is present at residues 537-543; that stretch reads QHRGGVG.

Belongs to the type II topoisomerase GyrA/ParC subunit family. In terms of assembly, heterotetramer, composed of two GyrA and two GyrB chains. In the heterotetramer, GyrA contains the active site tyrosine that forms a transient covalent intermediate with DNA, while GyrB binds cofactors and catalyzes ATP hydrolysis.

It is found in the cytoplasm. It carries out the reaction ATP-dependent breakage, passage and rejoining of double-stranded DNA.. Its function is as follows. A type II topoisomerase that negatively supercoils closed circular double-stranded (ds) DNA in an ATP-dependent manner to modulate DNA topology and maintain chromosomes in an underwound state. Negative supercoiling favors strand separation, and DNA replication, transcription, recombination and repair, all of which involve strand separation. Also able to catalyze the interconversion of other topological isomers of dsDNA rings, including catenanes and knotted rings. Type II topoisomerases break and join 2 DNA strands simultaneously in an ATP-dependent manner. This Mycoplasma pneumoniae (strain ATCC 29342 / M129 / Subtype 1) (Mycoplasmoides pneumoniae) protein is DNA gyrase subunit A.